The chain runs to 563 residues: Lipase 2 (563 aa).

The signal sequence occupies residues 1 to 19 (MVSKSLFLAAAVNLAGVLA). At Gln20 the chain carries Pyrrolidone carboxylic acid. Cys80 and Cys124 are oxidised to a cystine. The active-site Acyl-ester intermediate is Ser236. Cys295 and Cys307 form a disulfide bridge. A glycan (N-linked (GlcNAc...) asparagine) is linked at Asn302. The active-site Charge relay system is Glu373. N-linked (GlcNAc...) asparagine glycosylation is present at Asn383. His482 functions as the Charge relay system in the catalytic mechanism.

It belongs to the type-B carboxylesterase/lipase family. As to quaternary structure, monomer.

It localises to the secreted. It catalyses the reaction a triacylglycerol + H2O = a diacylglycerol + a fatty acid + H(+). Its function is as follows. Hydrolyzes all ester bonds in triglyceride and displays a high affinity for triolein. For unsaturated substrates having long fatty acyl chains (C18:2 cis-9, cis-12 and C18:3 cis-9, cis-12, cis-15) GCL I shows higher specific activity than GCL II, whereas GCL II shows higher specific activity against saturated substrates having short fatty acid chains (C8, C10, C12 and C14). In Geotrichum candidum (Oospora lactis), this protein is Lipase 2 (LIP2).